The primary structure comprises 331 residues: DNA-directed RNA polymerase subunit alpha (331 aa).

The tract at residues 1 to 237 (MQSSVTEFLI…NQLESFVYLR (237 aa)) is alpha N-terminal domain (alpha-NTD). The tract at residues 251 to 331 (FDPILLRPVD…NWPPDNILDN (81 aa)) is alpha C-terminal domain (alpha-CTD).

The protein belongs to the RNA polymerase alpha chain family. Homodimer. The RNAP catalytic core consists of 2 alpha, 1 beta, 1 beta' and 1 omega subunit. When a sigma factor is associated with the core the holoenzyme is formed, which can initiate transcription.

It catalyses the reaction RNA(n) + a ribonucleoside 5'-triphosphate = RNA(n+1) + diphosphate. Functionally, DNA-dependent RNA polymerase catalyzes the transcription of DNA into RNA using the four ribonucleoside triphosphates as substrates. This is DNA-directed RNA polymerase subunit alpha from Buchnera aphidicola subsp. Baizongia pistaciae (strain Bp).